A 219-amino-acid polypeptide reads, in one-letter code: RNA-free ribonuclease P (219 aa).

It belongs to the HARP family.

It carries out the reaction Endonucleolytic cleavage of RNA, removing 5'-extranucleotides from tRNA precursor.. In terms of biological role, RNA-free RNase P that catalyzes the removal of the 5'-leader sequence from pre-tRNA to produce the mature 5'-terminus. This Staphylothermus marinus (strain ATCC 43588 / DSM 3639 / JCM 9404 / F1) protein is RNA-free ribonuclease P.